Here is a 403-residue protein sequence, read N- to C-terminus: Phosphopentomutase (403 aa).

Residues Asp13, Asp298, His303, Asp339, His340, and His351 each coordinate Mn(2+).

This sequence belongs to the phosphopentomutase family. The cofactor is Mn(2+).

It is found in the cytoplasm. It catalyses the reaction 2-deoxy-alpha-D-ribose 1-phosphate = 2-deoxy-D-ribose 5-phosphate. It carries out the reaction alpha-D-ribose 1-phosphate = D-ribose 5-phosphate. It functions in the pathway carbohydrate degradation; 2-deoxy-D-ribose 1-phosphate degradation; D-glyceraldehyde 3-phosphate and acetaldehyde from 2-deoxy-alpha-D-ribose 1-phosphate: step 1/2. Its function is as follows. Isomerase that catalyzes the conversion of deoxy-ribose 1-phosphate (dRib-1-P) and ribose 1-phosphate (Rib-1-P) to deoxy-ribose 5-phosphate (dRib-5-P) and ribose 5-phosphate (Rib-5-P), respectively. This chain is Phosphopentomutase, found in Streptococcus pyogenes serotype M2 (strain MGAS10270).